Reading from the N-terminus, the 475-residue chain is MTAPRTLYDKIWDDHVVHQSEDGTCLLYIDRHLVHEVTSPQAFEGLRMTGRKVRAPEKTIAVPDHNVPTTEGRDTKIDNEESRIQVEALDRNARDFGINYYPVSDIRQGIVHIVGPEQGWTLPGMTVVCGDSHTATHGAFGALAHGIGTSEVEHVLATQTLIQKKSKNMKVEITGSLRPGVTAKDITLSVIGLTGTAGGTGYVIEYCGQAIRELSMEGRMTVCNMAIEGGARAGLIAPDEKTFAYVMGRPHAPKGAAWEAALAYWKTLFTDKGAQFDKVVTIRGEDIAPVVTWGTSPEDVLPITATVPAPEDFTGGKVEAARRSLEYMGLTPGQKLTDIKIDTVFIGSCTNGRIEDLRAAAEILKGKKVAPGMRAMVVPGSGLVRAQAEEEGLAQIFIDAGFEWRLAGCSMCLAMNPDQLSPGERCASTSNRNFEGRQGRNGRTHLVSPGMAAAAAITGHLTDVRDLMMAPAEPA.

[4Fe-4S] cluster contacts are provided by Cys349, Cys409, and Cys412.

This sequence belongs to the aconitase/IPM isomerase family. LeuC type 1 subfamily. Heterodimer of LeuC and LeuD. It depends on [4Fe-4S] cluster as a cofactor.

It carries out the reaction (2R,3S)-3-isopropylmalate = (2S)-2-isopropylmalate. It participates in amino-acid biosynthesis; L-leucine biosynthesis; L-leucine from 3-methyl-2-oxobutanoate: step 2/4. Catalyzes the isomerization between 2-isopropylmalate and 3-isopropylmalate, via the formation of 2-isopropylmaleate. This Cereibacter sphaeroides (strain ATCC 17029 / ATH 2.4.9) (Rhodobacter sphaeroides) protein is 3-isopropylmalate dehydratase large subunit.